A 338-amino-acid chain; its full sequence is Malate dehydrogenase, mitochondrial (338 aa).

The N-terminal 24 residues, 1–24 (MLSALARPASAALRRSFSTSAQNN), are a transit peptide targeting the mitochondrion. NAD(+) contacts are provided by residues 31–37 (GASGGIG) and D57. O-linked (GlcNAc) serine glycosylation occurs at S33. Residues K78 and K91 each carry the N6-acetyllysine; alternate modification. N6-succinyllysine; alternate occurs at positions 78 and 91. 2 residues coordinate substrate: R104 and R110. Residues N117 and 140 to 142 (IAN) contribute to the NAD(+) site. Substrate is bound at residue N142. Residue K165 is modified to N6-acetyllysine. A substrate-binding site is contributed by R176. K185 is modified (N6-acetyllysine; alternate). K185 is modified (N6-succinyllysine; alternate). Residue H200 is the Proton acceptor of the active site. K203 is subject to N6-succinyllysine. N6-acetyllysine; alternate is present on residues K215 and K239. K215 and K239 each carry N6-succinyllysine; alternate. Residue K239 is modified to N6-malonyllysine; alternate. Position 246 is a phosphoserine (S246). Position 251 (M251) interacts with NAD(+). K269 is subject to N6-succinyllysine. N6-acetyllysine; alternate is present on residues K296, K301, K314, and K324. K296, K301, K314, and K324 each carry N6-succinyllysine; alternate. Position 326 is a phosphoserine (S326). 3 positions are modified to N6-acetyllysine; alternate: K328, K329, and K335. Position 328 is an N6-succinyllysine; alternate (K328). An N6-malonyllysine; alternate modification is found at K329. K335 is modified (N6-succinyllysine; alternate).

This sequence belongs to the LDH/MDH superfamily. MDH type 1 family. As to quaternary structure, homodimer. In terms of processing, acetylation is enhanced after treatment either with trichostin A (TCA) or with nicotinamide (NAM) with the appearance of tri- and tetraacetylations. Glucose also increases acetylation.

It is found in the mitochondrion matrix. The catalysed reaction is (S)-malate + NAD(+) = oxaloacetate + NADH + H(+). Enzyme activity is enhanced by acetylation. The protein is Malate dehydrogenase, mitochondrial (MDH2) of Macaca fascicularis (Crab-eating macaque).